The sequence spans 339 residues: MRVYYDRDADVNLIKSKKVVIVGYGSQGRAHALNLKDSGAANVRVALREGSATAKKAQADGFEVMNVADAAKWADLMMMATPDELQADIYKEHIHDNLRDGAAIAFAHGLNVHFGLIEPKKSVDVVMIAPKGPGHTVRGEYQKGGGVPCLIAIHQDASGNAHDLALSYASGVGGGRSGVIETTFKEECETDLFGEQAVLCGGVVELIRTGFEVLVEAGYAPEMAYFECLHEMKLIVDLIYEGGIANMNYSISNTAEWGEYVTGPRIITAETKEEMKRVLKDIQTGKFTSDWMQEYRAGAARFKGIRRNNDSHQIEEVGEKLRGMMPWIAANKLVDKARN.

Residues 1-182 (MRVYYDRDAD…GGGRSGVIET (182 aa)) enclose the KARI N-terminal Rossmann domain. Residues 24–27 (YGSQ), R48, S51, T53, and 83–86 (DELQ) contribute to the NADP(+) site. H108 is an active-site residue. G134 is an NADP(+) binding site. The KARI C-terminal knotted domain occupies 183–328 (TFKEECETDL…EKLRGMMPWI (146 aa)). 4 residues coordinate Mg(2+): D191, E195, E227, and E231. S252 contacts substrate.

This sequence belongs to the ketol-acid reductoisomerase family. The cofactor is Mg(2+).

It catalyses the reaction (2R)-2,3-dihydroxy-3-methylbutanoate + NADP(+) = (2S)-2-acetolactate + NADPH + H(+). It carries out the reaction (2R,3R)-2,3-dihydroxy-3-methylpentanoate + NADP(+) = (S)-2-ethyl-2-hydroxy-3-oxobutanoate + NADPH + H(+). The protein operates within amino-acid biosynthesis; L-isoleucine biosynthesis; L-isoleucine from 2-oxobutanoate: step 2/4. It participates in amino-acid biosynthesis; L-valine biosynthesis; L-valine from pyruvate: step 2/4. Functionally, involved in the biosynthesis of branched-chain amino acids (BCAA). Catalyzes an alkyl-migration followed by a ketol-acid reduction of (S)-2-acetolactate (S2AL) to yield (R)-2,3-dihydroxy-isovalerate. In the isomerase reaction, S2AL is rearranged via a Mg-dependent methyl migration to produce 3-hydroxy-3-methyl-2-ketobutyrate (HMKB). In the reductase reaction, this 2-ketoacid undergoes a metal-dependent reduction by NADPH to yield (R)-2,3-dihydroxy-isovalerate. The protein is Ketol-acid reductoisomerase (NADP(+)) of Brucella anthropi (strain ATCC 49188 / DSM 6882 / CCUG 24695 / JCM 21032 / LMG 3331 / NBRC 15819 / NCTC 12168 / Alc 37) (Ochrobactrum anthropi).